Reading from the N-terminus, the 609-residue chain is MWITALLLVVLLLVVVHRVYVGLFTGSSPNPFAEDVKRPPEPLVTDKEARKKVLKQAFSVSRVPEKLDAVVIGSGIGGLASAAVLAKAGKRVLVLEQHTKAGGCCHTFGENGLEFDTGIHYIGRMREGNIGRFILDQITEGQLDWAPMASPFDLMILEGPNGRKEFPMYSGRKEYIQGLKEKFPKEEAVIDKYMELVKVVAHGVSHAILLKFLPLPLTQLLNKFGLLTRFSPFCRASTQSLAEVLKQLGASPELQAVLSYILPTYGVTPSHTTFSLHALLVDHYIQGAYYPRRGSSEIAFHTIPLIQRAGGAVLTRATVQSVLLDSAGRACGVSVKKGQELVNIYCPVVISNAGMFNTYQHLLPESVRYLPDVKKQLTMVKPGLSMLSIFICLKGTKEELKLQSTNYYVYFDTDMDKAMECYVSMPKEKAPEHIPLLFIPFPSSKDPTWEDRFPDRSTMTVLVPTAFEWFEEWQEEPKGKRGVDYETLKNTFREASMSVIMKLFPQLEGKVESVTGGSPLTNQYYLAAHRGATYGADHDLARLHPHAMASLRAQTPIPNLYLTGQDIFTCGLMGALQGALLCSSAILKRNLYSDLQALGSKVRAQKKKK.

An N-terminal signal peptide occupies residues 1-21 (MWITALLLVVLLLVVVHRVYV).

This sequence belongs to the carotenoid/retinoid oxidoreductase family. CrtISO subfamily. It depends on NAD(+) as a cofactor. Requires NADP(+) as cofactor. The cofactor is FAD. As to expression, highly expressed in liver, kidney and heart.

Its subcellular location is the endoplasmic reticulum membrane. The catalysed reaction is all-trans-13,14-dihydroretinol + A = all-trans-retinol + AH2. Its function is as follows. Catalyzes the saturation of all-trans-retinol to all-trans-13,14-dihydroretinol. Does not exhibit any activity toward all-trans-retinoic acid, nor 9-cis, 11-cis or 13-cis-retinol isomers. May play a role in the metabolism of vitamin A. Independently of retinol conversion, may regulate liver metabolism upstream of MLXIPL/ChREBP. May play a role in adipocyte differentiation. The chain is All-trans-retinol 13,14-reductase (Retsat) from Rattus norvegicus (Rat).